A 68-amino-acid polypeptide reads, in one-letter code: ATP synthase subunit c (68 aa).

Transmembrane regions (helical) follow at residues 4–24 (IAAA…NGLI) and 45–65 (IMFI…VIAF).

The protein belongs to the ATPase C chain family. In terms of assembly, F-type ATPases have 2 components, F(1) - the catalytic core - and F(0) - the membrane proton channel. F(1) has five subunits: alpha(3), beta(3), gamma(1), delta(1), epsilon(1). F(0) has three main subunits: a(1), b(2) and c(10-14). The alpha and beta chains form an alternating ring which encloses part of the gamma chain. F(1) is attached to F(0) by a central stalk formed by the gamma and epsilon chains, while a peripheral stalk is formed by the delta and b chains.

The protein resides in the cell membrane. In terms of biological role, f(1)F(0) ATP synthase produces ATP from ADP in the presence of a proton or sodium gradient. F-type ATPases consist of two structural domains, F(1) containing the extramembraneous catalytic core and F(0) containing the membrane proton channel, linked together by a central stalk and a peripheral stalk. During catalysis, ATP synthesis in the catalytic domain of F(1) is coupled via a rotary mechanism of the central stalk subunits to proton translocation. Functionally, key component of the F(0) channel; it plays a direct role in translocation across the membrane. A homomeric c-ring of between 10-14 subunits forms the central stalk rotor element with the F(1) delta and epsilon subunits. This is ATP synthase subunit c from Staphylococcus saprophyticus subsp. saprophyticus (strain ATCC 15305 / DSM 20229 / NCIMB 8711 / NCTC 7292 / S-41).